The chain runs to 394 residues: Probable purine permease 23 (394 aa).

A compositionally biased stretch (basic and acidic residues) spans methionine 1–glutamine 20. The interval methionine 1–proline 24 is disordered. Serine 29 carries the phosphoserine modification. Helical transmembrane passes span isoleucine 43–leucine 63, tryptophan 85–phenylalanine 105, leucine 124–leucine 144, glycine 152–isoleucine 172, tryptophan 180–serine 200, glycine 211–valine 231, valine 254–phenylalanine 274, valine 301–valine 321, isoleucine 328–isoleucine 348, and phenylalanine 352–tyrosine 372.

This sequence belongs to the purine permeases (TC 2.A.7.14) family.

The protein resides in the membrane. The protein is Probable purine permease 23 (PUP23) of Arabidopsis thaliana (Mouse-ear cress).